Here is a 103-residue protein sequence, read N- to C-terminus: Cell division protein FtsB (103 aa).

The Cytoplasmic segment spans residues 1 to 3 (MGK). Residues 4–21 (LTLLLLAILVWLQYSLWF) traverse the membrane as a helical segment. Residues 22-103 (GKNGIHDYSR…RAQTAGQNNR (82 aa)) lie on the Periplasmic side of the membrane. Residues 31-71 (RVNDDVAAQQATNAKLKARNDQLFAEIDDLNGGQEALEERA) adopt a coiled-coil conformation.

This sequence belongs to the FtsB family. In terms of assembly, part of a complex composed of FtsB, FtsL and FtsQ.

The protein localises to the cell inner membrane. Functionally, essential cell division protein. May link together the upstream cell division proteins, which are predominantly cytoplasmic, with the downstream cell division proteins, which are predominantly periplasmic. This Escherichia fergusonii (strain ATCC 35469 / DSM 13698 / CCUG 18766 / IAM 14443 / JCM 21226 / LMG 7866 / NBRC 102419 / NCTC 12128 / CDC 0568-73) protein is Cell division protein FtsB.